A 209-amino-acid chain; its full sequence is Isopentenyl-diphosphate Delta-isomerase (209 aa).

2 residues coordinate Mn(2+): H31 and H38. The 136-residue stretch at 36–171 folds into the Nudix hydrolase domain; sequence PLHLAFSVYI…RLLVSPWCRA (136 aa). C73 is an active-site residue. C73 serves as a coordination point for Mg(2+). Position 75 (H75) interacts with Mn(2+). E93 provides a ligand contact to Mg(2+). Mn(2+) is bound by residues E120 and E122. The active site involves E122.

It belongs to the IPP isomerase type 1 family. Mg(2+) serves as cofactor. Mn(2+) is required as a cofactor.

It is found in the cytoplasm. It catalyses the reaction isopentenyl diphosphate = dimethylallyl diphosphate. It participates in isoprenoid biosynthesis; dimethylallyl diphosphate biosynthesis; dimethylallyl diphosphate from isopentenyl diphosphate: step 1/1. Functionally, catalyzes the 1,3-allylic rearrangement of the homoallylic substrate isopentenyl (IPP) to its highly electrophilic allylic isomer, dimethylallyl diphosphate (DMAPP). The sequence is that of Isopentenyl-diphosphate Delta-isomerase from Rhizobium rhizogenes (Agrobacterium rhizogenes).